The chain runs to 473 residues: Sulfate adenylyltransferase subunit 1 (473 aa).

Residues 19–238 (KTLLKFLTCG…IKIKNSISSE (220 aa)) form the tr-type G domain. The G1 stretch occupies residues 28–35 (GSVDDGKS). 28–35 (GSVDDGKS) is a GTP binding site. A G2 region spans residues 86-90 (GITID). Positions 107-110 (DTPG) are G3. GTP is bound by residues 107-111 (DTPGH) and 162-165 (NKMD). The tract at residues 162–165 (NKMD) is G4. The interval 200 to 202 (SAL) is G5.

Belongs to the TRAFAC class translation factor GTPase superfamily. Classic translation factor GTPase family. CysN/NodQ subfamily. As to quaternary structure, heterodimer composed of CysD, the smaller subunit, and CysN.

It catalyses the reaction sulfate + ATP + H(+) = adenosine 5'-phosphosulfate + diphosphate. The protein operates within sulfur metabolism; hydrogen sulfide biosynthesis; sulfite from sulfate: step 1/3. In terms of biological role, with CysD forms the ATP sulfurylase (ATPS) that catalyzes the adenylation of sulfate producing adenosine 5'-phosphosulfate (APS) and diphosphate, the first enzymatic step in sulfur assimilation pathway. APS synthesis involves the formation of a high-energy phosphoric-sulfuric acid anhydride bond driven by GTP hydrolysis by CysN coupled to ATP hydrolysis by CysD. This chain is Sulfate adenylyltransferase subunit 1, found in Buchnera aphidicola subsp. Acyrthosiphon pisum (strain Tuc7).